Here is a 448-residue protein sequence, read N- to C-terminus: Glutamyl-tRNA reductase (448 aa).

Residues Thr-49–Arg-52, Ser-109, Glu-114–Gln-116, and Gln-120 each bind substrate. Cys-50 acts as the Nucleophile in catalysis. Position 189-194 (Gly-189–Ser-194) interacts with NADP(+).

The protein belongs to the glutamyl-tRNA reductase family. In terms of assembly, homodimer.

It catalyses the reaction (S)-4-amino-5-oxopentanoate + tRNA(Glu) + NADP(+) = L-glutamyl-tRNA(Glu) + NADPH + H(+). The protein operates within porphyrin-containing compound metabolism; protoporphyrin-IX biosynthesis; 5-aminolevulinate from L-glutamyl-tRNA(Glu): step 1/2. Catalyzes the NADPH-dependent reduction of glutamyl-tRNA(Glu) to glutamate 1-semialdehyde (GSA). This is Glutamyl-tRNA reductase from Staphylococcus aureus (strain Mu3 / ATCC 700698).